The primary structure comprises 492 residues: Probable malate:quinone oxidoreductase 1 (492 aa).

This sequence belongs to the MQO family. The cofactor is FAD.

It catalyses the reaction (S)-malate + a quinone = a quinol + oxaloacetate. Its pathway is carbohydrate metabolism; tricarboxylic acid cycle; oxaloacetate from (S)-malate (quinone route): step 1/1. In Staphylococcus epidermidis (strain ATCC 12228 / FDA PCI 1200), this protein is Probable malate:quinone oxidoreductase 1.